The primary structure comprises 649 residues: Sodium/nucleoside cotransporter 1 (649 aa).

At 1 to 80 (MENDPSRRRE…ARSFCREHMQ (80 aa)) the chain is on the cytoplasmic side. Residues 81–104 (LFRWIGTGLLCTGLSAFLLVACLL) traverse the membrane as a helical segment. The Extracellular portion of the chain corresponds to 105 to 109 (DFQRA). Residues 110 to 128 (LALFVLTCVVLTFLGHRLL) traverse the membrane as a helical segment. At 129-147 (KRLLGPKLRRFLKPQGHPR) the chain is on the cytoplasmic side. The chain crosses the membrane as a helical span at residues 148–167 (LLLWFKRGLALAAFLGLVLW). Topologically, residues 168–178 (LSLDTSQRPEQ) are extracellular. Residues 179-195 (LVSFAGICVFVALLFAC) traverse the membrane as a helical segment. Residues 196-201 (SKHHCA) lie on the Cytoplasmic side of the membrane. The chain crosses the membrane as a helical span at residues 202–222 (VSWRAVSWGLGLQFVLGLLVI). Residues 223–261 (RTEPGFIAFEWLGEQIRIFLSYTKAGSSFVFGEALVKDV) lie on the Extracellular side of the membrane. The helical transmembrane segment at 262–283 (FAFQVLPIIVFFSCVISVLYHV) threads the bilayer. Residues 284 to 294 (GLMQWVILKIA) are Cytoplasmic-facing. A helical transmembrane segment spans residues 295 to 318 (WLMQVTMGTTATETLSVAGNIFVS). At 319–337 (QTEAPLLIRPYLADMTLSE) the chain is on the extracellular side. The chain crosses the membrane as a helical span at residues 338 to 360 (VHVVMTGGYATIAGSLLGAYISF). Residues 361-366 (GIDATS) lie on the Cytoplasmic side of the membrane. Residues 367–386 (LIAASVMAAPCALALSKLVY) form a helical membrane-spanning segment. Residues 387 to 423 (PEVEESKFRREEGVKLTYGDAQNLIEAASTGAAISVK) are Extracellular-facing. The chain crosses the membrane as a helical span at residues 424 to 446 (VVANIAANLIAFLAVLDFINAAL). Residues 447-457 (SWLGDMVDIQG) are Cytoplasmic-facing. A helical transmembrane segment spans residues 458–479 (LSFQLICSYILRPVAFLMGVAW). Residues 480–534 (EDCPVVAELLGIKLFLNEFVAYQDLSKYKQRRLAGAEEWVGDRKQWISVRAEVLT) are Extracellular-facing. The helical transmembrane segment at 535 to 558 (TFALCGFANFSSIGIMLGGLTSMV) threads the bilayer. The Cytoplasmic portion of the chain corresponds to 559 to 569 (PQRKSDFSQIV). A helical membrane pass occupies residues 570–592 (LRALFTGACVSLVNACMAGILYM). The Extracellular segment spans residues 593 to 649 (PRGAEVDCMSLLNTTLSSSSFEIYQCCREAFQSVNPEFSPEALDNCCRFYNHTICAQ). N-linked (GlcNAc...) asparagine glycosylation is found at N605 and N643.

Belongs to the concentrative nucleoside transporter (CNT) (TC 2.A.41) family. In terms of processing, N-glycosylated. N-glycosylation is required for localization to the plasma membrane and the transporter activity. In terms of tissue distribution, expressed in kidney.

The protein localises to the cell membrane. Its subcellular location is the apical cell membrane. The catalysed reaction is uridine(out) + Na(+)(out) = uridine(in) + Na(+)(in). It carries out the reaction thymidine(out) + Na(+)(out) = thymidine(in) + Na(+)(in). It catalyses the reaction cytidine(out) + Na(+)(out) = cytidine(in) + Na(+)(in). The enzyme catalyses adenosine(out) + Na(+)(out) = adenosine(in) + Na(+)(in). With respect to regulation, due to its high apparent affinity but slow transport, adenosine could act as a negative regulator of pyrimidine transport under some conditions. Its function is as follows. Sodium and pyrimidine nucleoside symporter of the plasma membrane that imports uridine, thymidine and cytidine into cells by coupling their transport to the transmembrane sodium electrochemical gradient. Also transports adenosine, an atypical substrate transported with high apparent affinity, but low maximum velocity. Therefore, exhibits the transport characteristics of the nucleoside transport system cit or N2 subtype (N2/cit). Involved in renal nucleoside (re)absorption. The sequence is that of Sodium/nucleoside cotransporter 1 from Homo sapiens (Human).